We begin with the raw amino-acid sequence, 306 residues long: Phenylcoumaran benzylic ether reductase POP1 (306 aa).

Residues 9–15 (GGTGYIG), Arg34, and Lys43 each bind NADP(+). Lys131 functions as the Proton acceptor in the catalytic mechanism. Residue Arg135 coordinates NADP(+).

This sequence belongs to the NmrA-type oxidoreductase family. Isoflavone reductase subfamily.

It carries out the reaction (-)-dehydrodiconiferyl alcohol + NADPH + H(+) = (S)-isodihydrodehydrodiconiferyl alcohol + NADP(+). It catalyses the reaction (+)-dehydrodiconiferyl alcohol + NADPH + H(+) = (R)-isodihydrodehydrodiconiferyl alcohol + NADP(+). The enzyme catalyses (2R,3S)-dihydrodehydrodiconiferyl alcohol + NADPH + H(+) = (S)-tetrahydrodehydrodiconiferyl alcohol + NADP(+). The catalysed reaction is (2S,3R)-dihydrodehydrodiconiferyl alcohol + NADPH + H(+) = (R)-tetrahydrodehydrodiconiferyl alcohol + NADP(+). In terms of biological role, oxidoreductase involved in lignan biosynthesis. Catalyzes the NADPH-dependent reduction of phenylcoumaran benzylic ethers. Converts dehydrodiconiferyl alcohol (DDC) to isodihydrodehydrodiconiferyl alcohol (IDDDC), and dihydrodehydrodiconiferyl alcohol (DDDC) to tetrahydrodehydrodiconiferyl alcohol (TDDC). The sequence is that of Phenylcoumaran benzylic ether reductase POP1 from Populus trichocarpa (Western balsam poplar).